We begin with the raw amino-acid sequence, 148 residues long: MTITQVKIKKLENFSGSLPEYATEHSAGMDLIAANEQPITIKAGAIQLIPTGIAIALPDSFEAQIRPRSGLAVKHGITVANSPGTIDADYRGEIKVILINLGKEDFIIEKGMRIAQMIIAKYERILWEESSSLMETMRGSGGFGSTGV.

Substrate contacts are provided by residues R68–G70, N81, T85–D87, and K95.

It belongs to the dUTPase family. Mg(2+) is required as a cofactor.

It catalyses the reaction dUTP + H2O = dUMP + diphosphate + H(+). It participates in pyrimidine metabolism; dUMP biosynthesis; dUMP from dCTP (dUTP route): step 2/2. Functionally, this enzyme is involved in nucleotide metabolism: it produces dUMP, the immediate precursor of thymidine nucleotides and it decreases the intracellular concentration of dUTP so that uracil cannot be incorporated into DNA. This chain is Deoxyuridine 5'-triphosphate nucleotidohydrolase, found in Rickettsia massiliae (strain Mtu5).